The primary structure comprises 132 residues: UPF0719 inner membrane protein YjfL (132 aa).

At 1 to 6 (MHILDS) the chain is on the periplasmic side. A helical membrane pass occupies residues 7–27 (LLAFSAYFFIGVAMVIIFLFI). The Cytoplasmic portion of the chain corresponds to 28-46 (YSKITPHNEWQLIKNNNTA). A helical transmembrane segment spans residues 47 to 67 (ASLAFSGTLLGYVIPLSSAAI). Residues 68–71 (NAVS) lie on the Periplasmic side of the membrane. A helical membrane pass occupies residues 72–92 (IPDYFAWGGIALVIQLLVFAG). The Cytoplasmic portion of the chain corresponds to 93–109 (VRLYMPALSEKIINHNT). Residues 110-130 (AAGMFMGTAALAGGIFNAACM) form a helical membrane-spanning segment. Topologically, residues 131 to 132 (TW) are periplasmic.

The protein belongs to the UPF0719 family.

The protein resides in the cell inner membrane. This Escherichia coli O157:H7 protein is UPF0719 inner membrane protein YjfL (yjfL).